The chain runs to 667 residues: tRNA 5-methylaminomethyl-2-thiouridine biosynthesis bifunctional protein MnmC (667 aa).

The segment covering 1 to 12 (MSKQQAPNTTGI) has biased composition (polar residues). Residues 1–20 (MSKQQAPNTTGIGTADLQWH) are disordered. The tRNA (mnm(5)s(2)U34)-methyltransferase stretch occupies residues 1–240 (MSKQQAPNTT…KRECLRGVLE (240 aa)). The segment at 268 to 667 (IGAGIAGAAC…LVRSLKKPPL (400 aa)) is FAD-dependent cmnm(5)s(2)U34 oxidoreductase.

In the N-terminal section; belongs to the methyltransferase superfamily. tRNA (mnm(5)s(2)U34)-methyltransferase family. This sequence in the C-terminal section; belongs to the DAO family. The cofactor is FAD.

It localises to the cytoplasm. It carries out the reaction 5-aminomethyl-2-thiouridine(34) in tRNA + S-adenosyl-L-methionine = 5-methylaminomethyl-2-thiouridine(34) in tRNA + S-adenosyl-L-homocysteine + H(+). Functionally, catalyzes the last two steps in the biosynthesis of 5-methylaminomethyl-2-thiouridine (mnm(5)s(2)U) at the wobble position (U34) in tRNA. Catalyzes the FAD-dependent demodification of cmnm(5)s(2)U34 to nm(5)s(2)U34, followed by the transfer of a methyl group from S-adenosyl-L-methionine to nm(5)s(2)U34, to form mnm(5)s(2)U34. The chain is tRNA 5-methylaminomethyl-2-thiouridine biosynthesis bifunctional protein MnmC from Magnetococcus marinus (strain ATCC BAA-1437 / JCM 17883 / MC-1).